A 186-amino-acid polypeptide reads, in one-letter code: MRSPQPHRSGGDTQQHFQSTVSVQKLKRFNSLILVFRFAAFCFSLASAVFMLTNSRGSDSLHWYNFDAFRYVFAANAIVAIYSLFEMAASVWEISRNATLFPEICQVWFDFGHDQVFAYLLLSANTAGTELARTLKDTCTDNKAFCVQSDIAIVLGFAGFLFLGISSLFSGFRVVCFIINGSRFYV.

The Cytoplasmic portion of the chain corresponds to 1-31; the sequence is MRSPQPHRSGGDTQQHFQSTVSVQKLKRFNS. Residues 32–52 traverse the membrane as a helical segment; it reads LILVFRFAAFCFSLASAVFML. Residues 53–71 lie on the Extracellular side of the membrane; sequence TNSRGSDSLHWYNFDAFRY. The chain crosses the membrane as a helical span at residues 72–92; the sequence is VFAANAIVAIYSLFEMAASVW. Residues 93-103 are Cytoplasmic-facing; that stretch reads EISRNATLFPE. The chain crosses the membrane as a helical span at residues 104–124; the sequence is ICQVWFDFGHDQVFAYLLLSA. The Extracellular portion of the chain corresponds to 125 to 150; that stretch reads NTAGTELARTLKDTCTDNKAFCVQSD. A helical transmembrane segment spans residues 151–171; sequence IAIVLGFAGFLFLGISSLFSG. The Cytoplasmic portion of the chain corresponds to 172–186; sequence FRVVCFIINGSRFYV.

This sequence belongs to the Casparian strip membrane proteins (CASP) family. As to quaternary structure, homodimer and heterodimers.

It is found in the cell membrane. This chain is CASP-like protein 4C2, found in Populus trichocarpa (Western balsam poplar).